Reading from the N-terminus, the 488-residue chain is Signal recognition particle receptor FtsY (488 aa).

The interval 14–82 (DTAPEDVSKP…AVPDDAVHGG (69 aa)) is disordered. Positions 32 to 67 (VGTSSTGSPVGTGAAMPAAQDAPSPAAPHAIATPDD) are enriched in low complexity. Residues 287 to 294 (GVNGVGKT), 369 to 373 (DTAGR), and 433 to 436 (TKLD) each bind GTP.

The protein belongs to the GTP-binding SRP family. FtsY subfamily. Part of the signal recognition particle protein translocation system, which is composed of SRP and FtsY. SRP is a ribonucleoprotein composed of Ffh and a 4.5S RNA molecule.

It is found in the cell inner membrane. Its subcellular location is the cytoplasm. The catalysed reaction is GTP + H2O = GDP + phosphate + H(+). In terms of biological role, involved in targeting and insertion of nascent membrane proteins into the cytoplasmic membrane. Acts as a receptor for the complex formed by the signal recognition particle (SRP) and the ribosome-nascent chain (RNC). Interaction with SRP-RNC leads to the transfer of the RNC complex to the Sec translocase for insertion into the membrane, the hydrolysis of GTP by both Ffh and FtsY, and the dissociation of the SRP-FtsY complex into the individual components. This chain is Signal recognition particle receptor FtsY, found in Nitratidesulfovibrio vulgaris (strain ATCC 29579 / DSM 644 / CCUG 34227 / NCIMB 8303 / VKM B-1760 / Hildenborough) (Desulfovibrio vulgaris).